Consider the following 167-residue polypeptide: Protein-export protein SecB (167 aa).

It belongs to the SecB family. Homotetramer, a dimer of dimers. One homotetramer interacts with 1 SecA dimer.

It localises to the cytoplasm. In terms of biological role, one of the proteins required for the normal export of preproteins out of the cell cytoplasm. It is a molecular chaperone that binds to a subset of precursor proteins, maintaining them in a translocation-competent state. It also specifically binds to its receptor SecA. In Wolbachia pipientis subsp. Culex pipiens (strain wPip), this protein is Protein-export protein SecB.